A 247-amino-acid chain; its full sequence is Small ribosomal subunit protein uS3 (247 aa).

The KH type-2 domain occupies isoleucine 18 to glutamate 87. Residues glutamine 226 to glycine 247 are disordered.

The protein belongs to the universal ribosomal protein uS3 family. In terms of assembly, part of the 30S ribosomal subunit.

In terms of biological role, binds the lower part of the 30S subunit head. The polypeptide is Small ribosomal subunit protein uS3 (Hyperthermus butylicus (strain DSM 5456 / JCM 9403 / PLM1-5)).